A 49-amino-acid polypeptide reads, in one-letter code: Large ribosomal subunit protein bL33 (49 aa).

It belongs to the bacterial ribosomal protein bL33 family.

This chain is Large ribosomal subunit protein bL33, found in Natranaerobius thermophilus (strain ATCC BAA-1301 / DSM 18059 / JW/NM-WN-LF).